A 259-amino-acid polypeptide reads, in one-letter code: uncharacterized protein (259 aa).

An ABC transporter domain is found at 4-243 (INLKNINLTR…KILTDFYQEK (240 aa)). 36 to 43 (GLNGSGKS) is an ATP binding site.

Belongs to the ABC transporter superfamily.

This is an uncharacterized protein from Lactococcus lactis subsp. lactis (strain IL1403) (Streptococcus lactis).